A 117-amino-acid chain; its full sequence is Immunoglobulin heavy variable 1-24 (117 aa).

An N-terminal signal peptide occupies residues 1–19 (MDCTWRILFLVAAATGTHA). Positions 20–44 (QVQLVQSGAEVKKPGASVKVSCKVS) are framework-1. The Ig-like domain occupies 20–117 (QVQLVQSGAE…EDTAVYYCAT (98 aa)). The cysteines at positions 41 and 115 are disulfide-linked. The complementarity-determining-1 stretch occupies residues 45-52 (GYTLTELS). Residues 53 to 69 (MHWVRQAPGKGLEWMGG) form a framework-2 region. Residues 70–77 (FDPEDGET) are complementarity-determining-2. Residues 78–115 (IYAQKFQGRVTMTEDTSTDTAYMELSSLRSEDTAVYYC) form a framework-3 region. The tract at residues 116–117 (AT) is complementarity-determining-3.

Immunoglobulins are composed of two identical heavy chains and two identical light chains; disulfide-linked.

The protein localises to the secreted. The protein resides in the cell membrane. In terms of biological role, v region of the variable domain of immunoglobulin heavy chains that participates in the antigen recognition. Immunoglobulins, also known as antibodies, are membrane-bound or secreted glycoproteins produced by B lymphocytes. In the recognition phase of humoral immunity, the membrane-bound immunoglobulins serve as receptors which, upon binding of a specific antigen, trigger the clonal expansion and differentiation of B lymphocytes into immunoglobulins-secreting plasma cells. Secreted immunoglobulins mediate the effector phase of humoral immunity, which results in the elimination of bound antigens. The antigen binding site is formed by the variable domain of one heavy chain, together with that of its associated light chain. Thus, each immunoglobulin has two antigen binding sites with remarkable affinity for a particular antigen. The variable domains are assembled by a process called V-(D)-J rearrangement and can then be subjected to somatic hypermutations which, after exposure to antigen and selection, allow affinity maturation for a particular antigen. The protein is Immunoglobulin heavy variable 1-24 of Homo sapiens (Human).